Consider the following 128-residue polypeptide: L-ectoine synthase (128 aa).

It belongs to the ectoine synthase family.

The catalysed reaction is (2S)-4-acetamido-2-aminobutanoate = L-ectoine + H2O. Its pathway is amine and polyamine biosynthesis; ectoine biosynthesis; L-ectoine from L-aspartate 4-semialdehyde: step 3/3. Catalyzes the circularization of gamma-N-acetyl-alpha,gamma-diaminobutyric acid (ADABA) to ectoine (1,4,5,6-tetrahydro-2-methyl-4-pyrimidine carboxylic acid), which is an excellent osmoprotectant. The polypeptide is L-ectoine synthase (Aliivibrio fischeri (strain ATCC 700601 / ES114) (Vibrio fischeri)).